A 479-amino-acid polypeptide reads, in one-letter code: Phosphatidylinositol 4-kinase type 2-alpha (479 aa).

Position 1 is an N-acetylmethionine (M1). The interval 1 to 58 (MDETSPLVSPERAQPPEYTFPSGSGAHFPQVPGGAVRVAAAAGSGPSPPCSPGHDRER) is disordered. A phosphoserine mark is found at S5, S9, S44, S47, and S51. Low complexity predominate over residues 31–45 (VPGGAVRVAAAAGSG). One can recognise a PI3K/PI4K catalytic domain in the interval 124-453 (SIYPERIYQG…VQMPPVIVET (330 aa)). The interval 130-136 (IYQGSSG) is G-loop. Residues 131-137 (YQGSSGS) and K152 contribute to the ATP site. The interval 157-159 (EPY) is important for substrate binding. Residues 165 to 178 (KWTKWLQKLCCPCC) are important for interaction with membranes. Residues C174, C175, C177, and C178 are each lipidated (S-palmitoyl cysteine). ATP is bound at residue 261 to 264 (QLFV). An important for interaction with membranes region spans residues 268 to 276 (KDADYWLRR). Residues 305-313 (RNTDRGNDN) form a catalytic loop region. Residues 344 to 364 (AIDNGLAFPLKHPDSWRAYPF) are activation loop. D346 contacts ATP. Positions 359 to 368 (WRAYPFYWAW) are important for interaction with membranes. Residue S462 is modified to Phosphoserine.

This sequence belongs to the PI3/PI4-kinase family. Type II PI4K subfamily. Associates with the BLOC-1 and the AP-3 complexes; the BLOC-1 complex is required for optimal binding of PI4K2A to the AP-3 complex. Interacts with BLOC1S5 and DTNBP1. Interacts with ITCH. Interacts with FOS; this interaction may enhance phosphatidylinositol phosphorylation activity. Interacts with ATG9A. Post-translationally, palmitoylated by ZDHHC3 and ZDHHC7 in the CCPCC motif. Palmitoylation is cholesterol-dependent, and required for TGN localization. Ubiquitinated by ITCH; this does not lead to proteasomal degradation. Detected in brain (at protein level).

Its subcellular location is the golgi apparatus. It is found in the trans-Golgi network membrane. The protein resides in the membrane raft. It localises to the endosome. The protein localises to the endosome membrane. Its subcellular location is the cytoplasmic vesicle. It is found in the cell projection. The protein resides in the dendrite. It localises to the presynaptic cell membrane. The protein localises to the synapse. Its subcellular location is the synaptosome. It is found in the mitochondrion. The protein resides in the membrane. It localises to the cell membrane. The protein localises to the perikaryon. Its subcellular location is the neuron projection. The enzyme catalyses a 1,2-diacyl-sn-glycero-3-phospho-(1D-myo-inositol) + ATP = a 1,2-diacyl-sn-glycero-3-phospho-(1D-myo-inositol 4-phosphate) + ADP + H(+). Functionally, membrane-bound phosphatidylinositol-4 kinase (PI4-kinase) that catalyzes the phosphorylation of phosphatidylinositol (PI) to phosphatidylinositol 4-phosphate (PI4P), a lipid that plays important roles in endocytosis, Golgi function, protein sorting and membrane trafficking and is required for prolonged survival of neurons. Besides, phosphorylation of phosphatidylinositol (PI) to phosphatidylinositol 4-phosphate (PI4P) is the first committed step in the generation of phosphatidylinositol 4,5-bisphosphate (PIP2), a precursor of the second messenger inositol 1,4,5-trisphosphate (InsP3). The polypeptide is Phosphatidylinositol 4-kinase type 2-alpha (Pi4k2a) (Mus musculus (Mouse)).